Here is a 379-residue protein sequence, read N- to C-terminus: Alanine racemase (379 aa).

Lys40 acts as the Proton acceptor; specific for D-alanine in catalysis. Lys40 is modified (N6-(pyridoxal phosphate)lysine). Residue Arg138 coordinates substrate. The Proton acceptor; specific for L-alanine role is filled by Tyr267. Met315 lines the substrate pocket.

It belongs to the alanine racemase family. The cofactor is pyridoxal 5'-phosphate.

It carries out the reaction L-alanine = D-alanine. It participates in amino-acid biosynthesis; D-alanine biosynthesis; D-alanine from L-alanine: step 1/1. In terms of biological role, catalyzes the interconversion of L-alanine and D-alanine. May also act on other amino acids. This chain is Alanine racemase (alr), found in Halothermothrix orenii (strain H 168 / OCM 544 / DSM 9562).